A 370-amino-acid chain; its full sequence is Actin-related protein 2/3 complex subunit 1A (370 aa).

WD repeat units follow at residues 6 to 45 (FLLE…WTKA), 50 to 89 (EHNG…WKPT), 140 to 179 (PIRS…VDEK), 202 to 241 (GTGG…QVST), 244 to 284 (TEFL…TFVS), and 322 to 365 (LHQN…SSIQ).

This sequence belongs to the WD repeat ARPC1 family. In terms of assembly, probable component of the Arp2/3 complex in which it may replace ARPC1B.

It is found in the cytoplasm. The protein localises to the cytoskeleton. The protein resides in the nucleus. Functionally, probably functions as a component of the Arp2/3 complex which is involved in regulation of actin polymerization and together with an activating nucleation-promoting factor (NPF) mediates the formation of branched actin networks. In addition to its role in the cytoplasmic cytoskeleton, the Arp2/3 complex also promotes actin polymerization in the nucleus, thereby regulating gene transcription and repair of damaged DNA. In Rattus norvegicus (Rat), this protein is Actin-related protein 2/3 complex subunit 1A (Arpc1a).